Reading from the N-terminus, the 138-residue chain is Transcription antitermination protein NusB (138 aa).

Belongs to the NusB family.

In terms of biological role, involved in transcription antitermination. Required for transcription of ribosomal RNA (rRNA) genes. Binds specifically to the boxA antiterminator sequence of the ribosomal RNA (rrn) operons. In Yersinia pseudotuberculosis serotype O:1b (strain IP 31758), this protein is Transcription antitermination protein NusB.